Consider the following 580-residue polypeptide: Small conductance calcium-activated potassium channel protein 2 (580 aa).

Disordered stretches follow at residues 1–68 (MSSC…VSKP) and 88–116 (GGGGGGGGGGGGSGHGSSSGTKSSKKKNQ). Over residues 48-61 (SSPSAAAAASSSAP) the composition is skewed to low complexity. Residues 88-104 (GGGGGGGGGGGGSGHGS) show a composition bias toward gly residues. Residues 140–160 (LIFGMFGIVVMVIETELSWGA) form a helical membrane-spanning segment. Position 161 is a phosphotyrosine (tyrosine 161). A helical transmembrane segment spans residues 169–189 (LALKCLISLSTIILLGLIIVY). The chain crosses the membrane as a helical span at residues 215-235 (IFFICLEILVCAIHPIPGNYT). Residues 257–277 (IILSIPMFLRLYLIARVMLLH) form a helical membrane-spanning segment. A helical membrane pass occupies residues 306 to 326 (LMTICPGTVLLVFSISLWIIA). The segment at residues 346-366 (FLGAMWLISITFLSIGYGDMV) is an intramembrane region (pore-forming). Residues 375 to 395 (VCLLTGIMGAGCTALVVAVVA) form a helical membrane-spanning segment. Positions 413 to 489 (DTQLTKRVKN…LVDLAKTQNI (77 aa)) are calmodulin-binding. Over residues 551-560 (HVTYNAERSR) the composition is skewed to basic and acidic residues. Residues 551–580 (HVTYNAERSRSSSRRRRSSSTAPPTSSESS) form a disordered region. The span at 569–580 (SSTAPPTSSESS) shows a compositional bias: low complexity.

This sequence belongs to the potassium channel KCNN family. KCa2.2/KCNN2 subfamily. In terms of assembly, homodimer. Heteromultimer with KCNN1 and KCNN3. The complex is composed of 4 channel subunits each of which binds to a calmodulin subunit which regulates the channel activity through calcium-binding. Interacts (via N-terminal domain) with MPP2. In terms of tissue distribution, brain.

The protein resides in the membrane. It localises to the cytoplasm. The protein localises to the myofibril. It is found in the sarcomere. Its subcellular location is the z line. The enzyme catalyses K(+)(in) = K(+)(out). Inhibited by bee venom neurotoxin apamin. Inhibited by UCL 1684 and tetraethylammonium (TEA). Functionally, small conductance calcium-activated potassium channel that mediates the voltage-independent transmembrane transfer of potassium across the cell membrane through a constitutive interaction with calmodulin which binds the intracellular calcium allowing its opening. The current is characterized by a voltage-independent activation, an intracellular calcium concentration increase-dependent activation and a single-channel conductance of about 3 picosiemens. Also presents an inwardly rectifying current, thus reducing its already small outward conductance of potassium ions, which is particularly the case when the membrane potential displays positive values, above + 20 mV. The inward rectification could be due to a blockade of the outward current by intracellular divalent cations such as calcium and magnesium and could also be due to an intrinsic property of the channel pore, independent of intracellular divalent ions. There are three positively charged amino acids in the S6 transmembrane domain, close to the pore, that collectively control the conductance and rectification through an electrostatic mechanism. Additionally, electrostatic contributions from these residues also play an important role in determining the intrinsic open probability of the channel in the absence of calcium, affecting the apparent calcium affinity for activation. Forms an heteromeric complex with calmodulin, which is constitutively associated in a calcium-independent manner. Channel opening is triggered when calcium binds the calmodulin resulting in a rotary movement leading to the formation of the dimeric complex to open the gate. Plays a role in the repolarization phase of cardiac action potential. This chain is Small conductance calcium-activated potassium channel protein 2, found in Rattus norvegicus (Rat).